The following is a 141-amino-acid chain: MGRYSGHGGTHTKKKQYKRARSTKNRAKDIDQIFDEIQPETIDKFSKFEVDPDLPGMGQNYCIHCSKHFVTNEDLQSHIKGKPHKIRVKELKTKPYSLAESQIPVDNGVKLNRDANGVPTTTDVTGTIKKSTTTTTTTTTV.

Positions 1–32 (MGRYSGHGGTHTKKKQYKRARSTKNRAKDIDQ) are disordered. Residues 10–25 (THTKKKQYKRARSTKN) show a composition bias toward basic residues. Residues 60-84 (NYCIHCSKHFVTNEDLQSHIKGKPH) form a C2H2-type zinc finger.

It belongs to the ZNF593/BUD20 C2H2-type zinc-finger protein family. Associates with pre-60S ribosomal particles; released from the pre-60S particle very early in the cytoplasm.

The protein localises to the nucleus. The protein resides in the cytoplasm. In terms of biological role, involved in pre-60S ribosomal particles maturation by promoting the nuclear export of the 60S ribosome. The sequence is that of Zinc finger protein 593 homolog from Dictyostelium discoideum (Social amoeba).